Consider the following 368-residue polypeptide: Outer membrane protein assembly factor BamC (368 aa).

The signal sequence occupies residues Met-1 to Ala-18. Cys-19 is lipidated: N-palmitoyl cysteine. Cys-19 carries the S-diacylglycerol cysteine lipid modification.

Belongs to the BamC family. As to quaternary structure, part of the Bam complex.

The protein resides in the cell outer membrane. Part of the outer membrane protein assembly complex, which is involved in assembly and insertion of beta-barrel proteins into the outer membrane. The polypeptide is Outer membrane protein assembly factor BamC (Pseudoalteromonas atlantica (strain T6c / ATCC BAA-1087)).